Reading from the N-terminus, the 329-residue chain is 4-hydroxy-3-methylbut-2-enyl diphosphate reductase 1 (329 aa).

Cysteine 29 lines the [4Fe-4S] cluster pocket. Histidine 58 and histidine 95 together coordinate (2E)-4-hydroxy-3-methylbut-2-enyl diphosphate. The dimethylallyl diphosphate site is built by histidine 58 and histidine 95. Isopentenyl diphosphate-binding residues include histidine 58 and histidine 95. Cysteine 117 is a [4Fe-4S] cluster binding site. Histidine 145 lines the (2E)-4-hydroxy-3-methylbut-2-enyl diphosphate pocket. Position 145 (histidine 145) interacts with dimethylallyl diphosphate. Histidine 145 serves as a coordination point for isopentenyl diphosphate. The active-site Proton donor is the glutamate 147. A (2E)-4-hydroxy-3-methylbut-2-enyl diphosphate-binding site is contributed by threonine 185. Cysteine 215 contributes to the [4Fe-4S] cluster binding site. The (2E)-4-hydroxy-3-methylbut-2-enyl diphosphate site is built by serine 243, serine 244, asparagine 245, and serine 287. Dimethylallyl diphosphate is bound by residues serine 243, serine 244, asparagine 245, and serine 287. Residues serine 243, serine 244, asparagine 245, and serine 287 each contribute to the isopentenyl diphosphate site.

Belongs to the IspH family. Requires [4Fe-4S] cluster as cofactor.

It catalyses the reaction isopentenyl diphosphate + 2 oxidized [2Fe-2S]-[ferredoxin] + H2O = (2E)-4-hydroxy-3-methylbut-2-enyl diphosphate + 2 reduced [2Fe-2S]-[ferredoxin] + 2 H(+). It carries out the reaction dimethylallyl diphosphate + 2 oxidized [2Fe-2S]-[ferredoxin] + H2O = (2E)-4-hydroxy-3-methylbut-2-enyl diphosphate + 2 reduced [2Fe-2S]-[ferredoxin] + 2 H(+). The protein operates within isoprenoid biosynthesis; dimethylallyl diphosphate biosynthesis; dimethylallyl diphosphate from (2E)-4-hydroxy-3-methylbutenyl diphosphate: step 1/1. It participates in isoprenoid biosynthesis; isopentenyl diphosphate biosynthesis via DXP pathway; isopentenyl diphosphate from 1-deoxy-D-xylulose 5-phosphate: step 6/6. Functionally, catalyzes the conversion of 1-hydroxy-2-methyl-2-(E)-butenyl 4-diphosphate (HMBPP) into a mixture of isopentenyl diphosphate (IPP) and dimethylallyl diphosphate (DMAPP). Acts in the terminal step of the DOXP/MEP pathway for isoprenoid precursor biosynthesis. The protein is 4-hydroxy-3-methylbut-2-enyl diphosphate reductase 1 of Mycobacterium tuberculosis (strain CDC 1551 / Oshkosh).